Reading from the N-terminus, the 450-residue chain is UDP-N-acetylmuramoylalanine--D-glutamate ligase (450 aa).

119 to 125 (GSNGKTT) provides a ligand contact to ATP.

The protein belongs to the MurCDEF family.

The protein resides in the cytoplasm. It catalyses the reaction UDP-N-acetyl-alpha-D-muramoyl-L-alanine + D-glutamate + ATP = UDP-N-acetyl-alpha-D-muramoyl-L-alanyl-D-glutamate + ADP + phosphate + H(+). It participates in cell wall biogenesis; peptidoglycan biosynthesis. In terms of biological role, cell wall formation. Catalyzes the addition of glutamate to the nucleotide precursor UDP-N-acetylmuramoyl-L-alanine (UMA). This Bacillus cereus (strain G9842) protein is UDP-N-acetylmuramoylalanine--D-glutamate ligase.